Here is a 577-residue protein sequence, read N- to C-terminus: Guanine nucleotide-binding protein-like 3-like protein (577 aa).

Residues 1–30 (MMKIRHKNKKPGKGSKGCKKPARQNGKKVT) are compositionally biased toward basic residues. Residues 1-75 (MMKIRHKNKK…VAREQERQRH (75 aa)) form a disordered region. The interval 9–28 (KKPGKGSKGCKKPARQNGKK) is required for nucleolar localization. Basic and acidic residues predominate over residues 42 to 75 (GNDHASREAELKKKRVEEMREKQQVAREQERQRH). A coiled-coil region spans residues 43 to 103 (NDHASREAEL…QKEEVLQELN (61 aa)). One can recognise a CP-type G domain in the interval 118–304 (YKEFRKVVEY…LLDAPGIVPG (187 aa)). Residues 166 to 169 (NKID), 253 to 260 (GLPNVGKS), and 297 to 300 (DAPG) each bind GTP.

The protein belongs to the TRAFAC class YlqF/YawG GTPase family. As to quaternary structure, interacts with MDM2; this interaction, which occurs in the nucleoplasm, stabilizes MDM2. Indirectly interacts with TP53, via MDM2-binding. Interacts with TERF1; this interaction probably occurs in the nucleoplasm and is increased during mitosis, when the nucleolus is disassembled. This binding may promote TERF1 homodimerization. Interacts with TERT.

It is found in the nucleus. The protein localises to the nucleolus. In terms of biological role, stabilizes TERF1 telomeric association by preventing TERF1 recruitment by PML. Stabilizes TERF1 protein by preventing its ubiquitination and hence proteasomal degradation. Does so by interfering with TERF1-binding to FBXO4 E3 ubiquitin-protein ligase. Required for cell proliferation. By stabilizing TRF1 protein during mitosis, promotes metaphase-to-anaphase transition. Stabilizes MDM2 protein by preventing its ubiquitination, and hence proteasomal degradation. By acting on MDM2, may affect TP53 activity. Required for normal processing of ribosomal pre-rRNA. Binds GTP. The sequence is that of Guanine nucleotide-binding protein-like 3-like protein (Gnl3l) from Mus musculus (Mouse).